Reading from the N-terminus, the 186-residue chain is Small ribosomal subunit protein uS5 (186 aa).

The region spanning 18-81 is the S5 DRBM domain; the sequence is FVDKLVHINR…EAAKRAMIRV (64 aa).

It belongs to the universal ribosomal protein uS5 family. As to quaternary structure, part of the 30S ribosomal subunit. Contacts proteins S4 and S8.

With S4 and S12 plays an important role in translational accuracy. Its function is as follows. Located at the back of the 30S subunit body where it stabilizes the conformation of the head with respect to the body. In Parvibaculum lavamentivorans (strain DS-1 / DSM 13023 / NCIMB 13966), this protein is Small ribosomal subunit protein uS5.